Reading from the N-terminus, the 714-residue chain is Macrophage-expressed gene 1 protein (714 aa).

The first 19 residues, M1–A19, serve as a signal peptide directing secretion. The 316-residue stretch at G30 to N345 folds into the MACPF domain. A disulfide bond links C34 and C70. A run of 2 beta stranded transmembrane segments spans residues F113–S120 and G127–E132. Residue N185 is glycosylated (N-linked (GlcNAc...) asparagine). The next 2 membrane-spanning stretches (beta stranded) occupy residues T235–F244 and V248–H256. N269 carries N-linked (GlcNAc...) asparagine glycosylation. Cysteines 350 and 369 form a disulfide. N375 carries an N-linked (GlcNAc...) asparagine glycan. Intrachain disulfides connect C385–C394, C432–C446, C436–C442, C531–C569, and C554–C574. Positions P410–E653 are P2. Residues A654–Y674 traverse the membrane as a helical segment. A disordered region spans residues E690–A714.

The protein belongs to the MPEG1 family. As to quaternary structure, homooligomer; predominantly forms a homooligomeric arc-shaped pore complex instead of complete rings of 16 subunits. Proteolytically processed in two steps to generate the Macrophage-expressed gene 1 protein, processed form: cleaved by trypsin in proximity of the helical transmembrane domain releases the ectodomain into the lysosomal lumen to orient the pore-forming domain toward the endogenous membranes, and processed by the asparagine endopeptidase (LGMN). Proteolytic processing in antigen-containing vesicles is pH-dependent. In terms of processing, monoubiquitinated in response to bacterial infection; ubiquitination is required for vesicular localization and antibacterial activity and can be blocked by bacterial cell cycle inhibiting factor (cif).

It localises to the cytoplasmic vesicle membrane. It is found in the cytoplasmic vesicle. Its subcellular location is the phagosome membrane. Its activity is regulated as follows. Forms arc- and ring-shaped pre-pores on top of the membrane at neutral to slightly acidic pH conditions and converts to pores upon acidification. Undergoes transition from the pre-pore to the pore in a processive clockwise hand-over-hand process. In the pore state, 2 alpha-helical regions refold into transmembrane hairpins (TMH1 and TMH2) in each protomer that form in the ensemble complex giant beta-barrel transmembrane pores. Functionally, pore-forming protein involved in both innate and adaptive immunity. Plays a central role in antigen cross-presentation in dendritic cells by forming a pore in antigen-containing compartments, thereby promoting delivery of antigens for cross-presentation. Also involved in innate immune response following bacterial infection; shows antibacterial activity against a wide spectrum of Gram-positive, Gram-negative and acid-fast bacteria. Reduces the viability of the intracytosolic pathogen L.monocytogenes by inhibiting acidification of the phagocytic vacuole of host cells which restricts bacterial translocation from the vacuole to the cytosol. Required for the antibacterial activity of reactive oxygen species and nitric oxide. In terms of biological role, pore-forming protein that plays a central role in antigen cross-presentation in dendritic cells by mediating delivery of antigens for cross-presentation. Dendritic cells bridge innate and adaptive immunity by capturing exogenous antigens on MHC class-I molecules and presenting them to naive CD8(+) T-cells. Acts by forming a pore in antigen-containing compartments, promoting the release of antigens into the cytosol, enabling generation of MHCI:peptide complexes and T-cell priming. This is Macrophage-expressed gene 1 protein (Mpeg1) from Rattus norvegicus (Rat).